The primary structure comprises 597 residues: MNNIRNFSIIAHIDHGKSTLADRIIQLCGGLSDREMEAQVLDSMDLERERGITIKAQTAALTYKARDGQVYNLNLIDTPGHVDFSYEVSRSLSACEGALLVVDASQGVEAQTVANCYMALDLGVEVVPVLNKIDLPNADPPAAMAEIEDVIGIDATDAVQCSAKTGLGVADVLEALIAKVPPPKGDPDAPLQALIVDSWFDNYVGVVMLVRVVNGTLKPKEKIRLMASGSVNLVESIGIFAPRSVSLPSLSAGQVGFIIAGIKELKAAKVGDTVTLASRPAAEALPGFKEVQPQVFAGLFPVEANQYDALRDSLEKLKLNDAALMYEPEVSQALGFGFRCGFLGLLHMEIVQERLEREFDMDLITTAPTVVYEVIMGDGSLIKVDNPSKMPEPSKIEEIREPIVTVNLYMPQEYVGSVITLCIAKRGIQMDMSYHGRQVKLVYEMPMAEIVLDFFDKLKSTSRGYASMDYEFKEYRASDVVKVDMLINSEKVDALAIIVHRSNSQYRGRQVASKMRELIPRQMFDVAIQATIGANIISRENVKALRKNVLAKCYGGDISRKKKLLEKQKAGKKRMKQVGSVEIPQEAFLAILQVDDK.

The tr-type G domain occupies 2-184 (NNIRNFSIIA…ALIAKVPPPK (183 aa)). Residues 14–19 (DHGKST) and 131–134 (NKID) each bind GTP.

Belongs to the TRAFAC class translation factor GTPase superfamily. Classic translation factor GTPase family. LepA subfamily.

The protein resides in the cell inner membrane. It catalyses the reaction GTP + H2O = GDP + phosphate + H(+). Functionally, required for accurate and efficient protein synthesis under certain stress conditions. May act as a fidelity factor of the translation reaction, by catalyzing a one-codon backward translocation of tRNAs on improperly translocated ribosomes. Back-translocation proceeds from a post-translocation (POST) complex to a pre-translocation (PRE) complex, thus giving elongation factor G a second chance to translocate the tRNAs correctly. Binds to ribosomes in a GTP-dependent manner. The sequence is that of Elongation factor 4 from Herminiimonas arsenicoxydans.